A 544-amino-acid polypeptide reads, in one-letter code: Glycoprotein gp100 (544 aa).

A signal peptide spans 1-19 (MKNFILLVFLFLLVSNSLG). At 20–489 (KSNKKDDQSP…SGGGGNKKLY (470 aa)) the chain is on the extracellular side. Residue N80 is glycosylated (N-linked (GlcNAc...) asparagine). Residues 84-99 (EPQNNPIPTVSINPDQ) are compositionally biased toward polar residues. The segment at 84–215 (EPQNNPIPTV…TPTRPSSSVS (132 aa)) is disordered. Composition is skewed to low complexity over residues 126–142 (SKPT…TIPP), 150–165 (PQTT…TPTP), and 189–199 (PKPTKSSKPTK). N-linked (GlcNAc...) asparagine glycans are attached at residues N224, N308, N332, N366, N380, N410, N422, and N478. The interval 444-480 (KPSTTDDDNNKNNDDGDSEIDSVGKSAVDSSKSNNNS) is disordered. A helical membrane pass occupies residues 490–510 (LLIILPTVLFIIVAALVAIFI). The Cytoplasmic portion of the chain corresponds to 511–544 (KTRVSQNSGSKVNKNNNKKDSINVPFQMLDEITT).

Post-translationally, N- and O-glycosylated.

The protein localises to the membrane. The chain is Glycoprotein gp100 (gppA) from Dictyostelium discoideum (Social amoeba).